We begin with the raw amino-acid sequence, 320 residues long: Nicotianamine synthase 1 (320 aa).

The protein belongs to the nicotianamine synthase (NAS)-like family. In shoots and roots.

It catalyses the reaction 3 S-adenosyl-L-methionine = nicotianamine + 3 S-methyl-5'-thioadenosine + 3 H(+). Synthesizes nicotianamine, a polyamine which serves as a sensor for the physiological iron status within the plant, and/or might be involved in the transport of iron. This is Nicotianamine synthase 1 (NAS1) from Arabidopsis thaliana (Mouse-ear cress).